A 1005-amino-acid chain; its full sequence is MDVRCINWFESHGENRFLYLKSRCRNGETVFIRFPHYFYYVVTDEIYQSLAPPPFNARPMGKMRTIDIDETISYNLDIKDRKCSVADMWLIEEPKKRNIQNATMDEFLNISWFYISNGISPDGCYSLDDQYLTKINNGCYHCGDPRNCFAKEIPRFDIPRSYLFLDIECHFDKKFPSVFINPISHTSYCYIDLSGKRLLFTLINEEMLTEQEIQEAVDRGCLRIQSLMEMDYERELVLCSEIVLLQIAKQLLELTFDYIVTFNGHNFDLRYITNRLELLTGEKIIFRSPDKKEAVHLCIYERNQSSHKGVGGMANTTFHVNNNNGTIFFDLYSFIQKSEKLDSYKLDSISKNAFSCMGKVLNRGVREMTFIGDDTTDAKGKAAVFAKVLTTGNYVTVDDIICKVIHKDIWENGFKVVLSCPTLTNDTYKLSFGKDDVDLAQMYKDYNLNIALDMARYCIHDACLCQYLWEYYGVETKTDAGASTYVLPQSMVFEYKASTVIKGPLLKLLLETKTILVRSETKQKFPYEGGKVFAPKQKMFSNNVLIFDYNSLYPNVCIFGNLSPETLVGVVVSSNRLEEEINNQLLLQKYPPPRYITVHCEPRLPNLISEIAIFDRSIEGTIPRLLRTFLAERARYKKMLKQATSSTEKAIYDSMQYTYKIIANSVYGLMGFRNSALYSYASAKSCTSIGRRMILYLESVLNGAELSNGMLRFANPLSNPFYMDDRDINPIVKTSLPIDYRFRFRSVYGDTDSVFTEIDSQDVDKSIEIAKELERLINSRVLFNNFKIEFEAVYKNLIMQSKKKYTTMKYSASSNSKSVPERINKGTSETRRDVSKFHKNMIKIYKTRLSEMLSEGRMNSNQVCIDILRSLETDLRSEFDSRSSPLELFMLSRMHHLNYKSADNPNMYLVTEYNKNNPETIELGERYYFAYICPANVPWTKKLVNIKTYETIIDRSFKLGSDQRIFYEVYFKRLTSEIVNLLDNKVLCISFFERMFGSRPTFYEA.

The protein belongs to the DNA polymerase type-B family. In terms of assembly, interacts with OPG148. Component of the Uracil-DNA glycosylase(UDG)-OPG148-polymerase complex; OPG148 and OPG116/UDG form a heterodimeric processivity factor that associates with OPG071 to form the processive polymerase holoenzyme.

The enzyme catalyses DNA(n) + a 2'-deoxyribonucleoside 5'-triphosphate = DNA(n+1) + diphosphate. Catalyzes DNA synthesis. Acquires processivity by associating with a heterodimeric processivity factor comprised of the viral OPG148 and OPG116 proteins, thereby forming the DNA polymerase holoenzyme. Displays 3'- to 5' exonuclease activity. Might participate in viral DNA recombination. Does not perform OPG116/D4synthesis across an abasic site. In Variola virus, this protein is DNA polymerase (OPG071).